The sequence spans 311 residues: Methionyl-tRNA formyltransferase (311 aa).

(6S)-5,6,7,8-tetrahydrofolate is bound at residue 110–113 (SLLP).

It belongs to the Fmt family.

The catalysed reaction is L-methionyl-tRNA(fMet) + (6R)-10-formyltetrahydrofolate = N-formyl-L-methionyl-tRNA(fMet) + (6S)-5,6,7,8-tetrahydrofolate + H(+). In terms of biological role, attaches a formyl group to the free amino group of methionyl-tRNA(fMet). The formyl group appears to play a dual role in the initiator identity of N-formylmethionyl-tRNA by promoting its recognition by IF2 and preventing the misappropriation of this tRNA by the elongation apparatus. In Acidobacterium capsulatum (strain ATCC 51196 / DSM 11244 / BCRC 80197 / JCM 7670 / NBRC 15755 / NCIMB 13165 / 161), this protein is Methionyl-tRNA formyltransferase.